The primary structure comprises 134 residues: Probable glycine cleavage system H protein (134 aa).

Positions 29 to 110 constitute a Lipoyl-binding domain; the sequence is TVLVGITDYA…PYEAWIAKIK (82 aa). K70 is subject to N6-lipoyllysine.

Belongs to the GcvH family. The glycine cleavage system is composed of four proteins: P, T, L and H. It depends on (R)-lipoate as a cofactor.

Its function is as follows. The glycine cleavage system catalyzes the degradation of glycine. The H protein shuttles the methylamine group of glycine from the P protein to the T protein. This is Probable glycine cleavage system H protein from Pyrococcus furiosus (strain ATCC 43587 / DSM 3638 / JCM 8422 / Vc1).